Reading from the N-terminus, the 245-residue chain is 4-hydroxy-tetrahydrodipicolinate reductase (245 aa).

NAD(+) is bound by residues 7–12 (GAKGKV), 75–77 (GTT), and 102–105 (APNF). The active-site Proton donor/acceptor is the His132. (S)-2,3,4,5-tetrahydrodipicolinate is bound at residue His133. The active-site Proton donor is the Lys136. 142 to 143 (GT) is a binding site for (S)-2,3,4,5-tetrahydrodipicolinate.

This sequence belongs to the DapB family.

Its subcellular location is the cytoplasm. It carries out the reaction (S)-2,3,4,5-tetrahydrodipicolinate + NAD(+) + H2O = (2S,4S)-4-hydroxy-2,3,4,5-tetrahydrodipicolinate + NADH + H(+). The catalysed reaction is (S)-2,3,4,5-tetrahydrodipicolinate + NADP(+) + H2O = (2S,4S)-4-hydroxy-2,3,4,5-tetrahydrodipicolinate + NADPH + H(+). The protein operates within amino-acid biosynthesis; L-lysine biosynthesis via DAP pathway; (S)-tetrahydrodipicolinate from L-aspartate: step 4/4. Catalyzes the conversion of 4-hydroxy-tetrahydrodipicolinate (HTPA) to tetrahydrodipicolinate. The sequence is that of 4-hydroxy-tetrahydrodipicolinate reductase from Mycobacterium bovis (strain ATCC BAA-935 / AF2122/97).